Reading from the N-terminus, the 1275-residue chain is Serine/threonine-protein kinase ULK4 (1275 aa).

Residues 4–280 (FILYEEIGRG…WTRLLQHSFW (277 aa)) enclose the Protein kinase domain. Catalysis depends on aspartate 121, which acts as the Proton acceptor. Disordered stretches follow at residues 299-346 (SRNT…EFRP) and 359-393 (FLLS…SPLT). Over residues 336 to 346 (FRLENPTEFRP) the composition is skewed to basic and acidic residues. Polar residues-rich tracts occupy residues 363-373 (SRPTPRTSTAV) and 384-393 (CSPQKTSPLT). HEAT repeat units lie at residues 727–765 (LIQE…YNRE), 842–880 (LKMC…ILSH), 926–964 (STVV…LLVN), 1025–1063 (LVEE…NLVA), 1151–1189 (NRPL…LYGG), and 1213–1253 (PKEQ…LAPG).

This sequence belongs to the protein kinase superfamily. Ser/Thr protein kinase family. APG1/unc-51/ULK1 subfamily.

It catalyses the reaction L-seryl-[protein] + ATP = O-phospho-L-seryl-[protein] + ADP + H(+). The catalysed reaction is L-threonyl-[protein] + ATP = O-phospho-L-threonyl-[protein] + ADP + H(+). May be involved in the remodeling of cytoskeletal components, such as alpha-tubulin, and in this way regulates neurite branching and elongation, as well as cell motility. The chain is Serine/threonine-protein kinase ULK4 (ULK4) from Pongo abelii (Sumatran orangutan).